The primary structure comprises 660 residues: WD repeat-containing protein 48 homolog (660 aa).

8 WD repeats span residues 23–78 (MHRS…RDLH), 84–120 (HHTD…CMST), 123–162 (THRD…KLTA), 174–213 (GNKD…KLMK), 216–255 (GHTD…CISS), 258–297 (CHSE…TAQL), 300–341 (IEDA…ISVE), and 362–401 (PGAA…KVCD).

Belongs to the WD repeat WDR48 family.

In terms of biological role, regulator of deubiquitinating complexes. Activates deubiquitination by increasing the catalytic turnover without increasing the affinity of deubiquitinating enzymes for the substrate. This chain is WD repeat-containing protein 48 homolog, found in Brugia malayi (Filarial nematode worm).